Reading from the N-terminus, the 212-residue chain is Probable chemoreceptor glutamine deamidase CheD (212 aa).

The protein belongs to the CheD family.

The catalysed reaction is L-glutaminyl-[protein] + H2O = L-glutamyl-[protein] + NH4(+). Probably deamidates glutamine residues to glutamate on methyl-accepting chemotaxis receptors (MCPs), playing an important role in chemotaxis. The protein is Probable chemoreceptor glutamine deamidase CheD of Oleidesulfovibrio alaskensis (strain ATCC BAA-1058 / DSM 17464 / G20) (Desulfovibrio alaskensis).